Here is a 277-residue protein sequence, read N- to C-terminus: NADPH-dependent 7-cyano-7-deazaguanine reductase (277 aa).

86–88 (IES) lines the substrate pocket. 88–89 (SK) lines the NADPH pocket. Catalysis depends on Cys184, which acts as the Thioimide intermediate. Asp191 functions as the Proton donor in the catalytic mechanism. 223–224 (HE) provides a ligand contact to substrate. 252-253 (RG) contacts NADPH.

The protein belongs to the GTP cyclohydrolase I family. QueF type 2 subfamily. Homodimer.

It localises to the cytoplasm. It catalyses the reaction 7-aminomethyl-7-carbaguanine + 2 NADP(+) = 7-cyano-7-deazaguanine + 2 NADPH + 3 H(+). It functions in the pathway tRNA modification; tRNA-queuosine biosynthesis. Functionally, catalyzes the NADPH-dependent reduction of 7-cyano-7-deazaguanine (preQ0) to 7-aminomethyl-7-deazaguanine (preQ1). In Chromohalobacter salexigens (strain ATCC BAA-138 / DSM 3043 / CIP 106854 / NCIMB 13768 / 1H11), this protein is NADPH-dependent 7-cyano-7-deazaguanine reductase.